The chain runs to 584 residues: MGPTTRARFVHNRRRRRRRGPYAAPDDDDEEEDQQEASSSSSSSDEGEEDAEEEGSGEVDDDDGEAAEPSGKEEEVSPVAAAARSGRKASITISLKKVCKVCKSTGHEAGFKGAVYIDCPRKPCFLCKMPGGHTTLTCPHRVAMEHGVIPASRRNTNTSLDYVFQSQVKGKIPMVKPQFLIPNQLECGNIKFHQRRVTCLEFHPTKNNVLLSGDKKGLLGVWDYVKLHEKITYDSVHSCILNSMKFDTTNDGLLYTASSDGTISSTDLDTGIGSSLLNLNPNGWNGPSTWRMIYGMDFNSDKGLLLVADSFGFLHLLDRRLKARIGDPILIHKKGSKVTSLHCNPAQPEVLLSSGNDHYARIWDTRKLEPNSAFVSLAHGRVVNSGYFSPQSGNKILTTCQDNRIRVWDYIFGNLESPSREIVHSHDFNRHLTPFKAEWDPKDHTETVAVIGRYISENYNGIALHPIDFIDTSTGKLLAEVMDPDITTISPVNKLHPRDDILASGSSRSIFIWKPKTESDATEERNREKAKEFVYGSGSRKKSNGKHENSSDDDSDGSCDGKKKKKAKKTRFTHTIKGKGKSKV.

Residues 1 to 87 (MGPTTRARFV…PVAAAARSGR (87 aa)) are disordered. Basic residues predominate over residues 8 to 20 (RFVHNRRRRRRRG). Composition is skewed to acidic residues over residues 25 to 35 (PDDDDEEEDQQ) and 45 to 66 (DEGE…DGEA). A CCHC-type zinc finger spans residues 122-140 (KPCFLCKMPGGHTTLTCPH). 7 WD repeats span residues 192 to 232 (FHQR…EKIT), 236 to 278 (VHSC…SLLN), 288 to 327 (STWR…RIGD), 333 to 373 (KKGS…PNSA), 378 to 418 (AHGR…LESP), 438 to 481 (EWDP…LAEV), and 484 to 523 (PDIT…DATE). A DWD box motif is present at residues 351-366 (LLSSGNDHYARIWDTR). The span at 517 to 532 (TESDATEERNREKAKE) shows a compositional bias: basic and acidic residues. A disordered region spans residues 517–584 (TESDATEERN…TIKGKGKSKV (68 aa)). The segment covering 562–584 (KKKKKAKKTRFTHTIKGKGKSKV) has biased composition (basic residues).

This sequence belongs to the WD repeat DDB2/WDR76 family. Component of the UV-DDB complex, which is composed of DDB1 and DDB2. In terms of tissue distribution, expressed in proliferating tissues such as shoot apical meristem (SAM), root tips and young leaves. Not detected in mature leaves.

Its subcellular location is the nucleus. Required for DNA repair. Binds to DDB1 to form the UV-damaged DNA-binding protein complex (the UV-DDB complex). The UV-DDB complex may recognize UV-induced DNA damage and recruit proteins of the nucleotide excision repair pathway (the NER pathway) to initiate DNA repair. May function as the substrate recognition module for a DCX (DDB1-CUL4-X-box) E3 ubiquitin-protein ligase complex. This chain is DNA damage-binding protein 2, found in Oryza sativa subsp. japonica (Rice).